Here is a 477-residue protein sequence, read N- to C-terminus: Bifunctional protein HldE (477 aa).

The segment at 1–319 (MTPPLPGFRD…AALGGGPAPA (319 aa)) is ribokinase. ATP is bound at residue 195–198 (NLAE). D264 is an active-site residue. Residues 346 to 477 (MTNGCFDLLH…DLIARIRSRG (132 aa)) are cytidylyltransferase.

This sequence in the N-terminal section; belongs to the carbohydrate kinase PfkB family. The protein in the C-terminal section; belongs to the cytidylyltransferase family. Homodimer.

The catalysed reaction is D-glycero-beta-D-manno-heptose 7-phosphate + ATP = D-glycero-beta-D-manno-heptose 1,7-bisphosphate + ADP + H(+). The enzyme catalyses D-glycero-beta-D-manno-heptose 1-phosphate + ATP + H(+) = ADP-D-glycero-beta-D-manno-heptose + diphosphate. Its pathway is nucleotide-sugar biosynthesis; ADP-L-glycero-beta-D-manno-heptose biosynthesis; ADP-L-glycero-beta-D-manno-heptose from D-glycero-beta-D-manno-heptose 7-phosphate: step 1/4. The protein operates within nucleotide-sugar biosynthesis; ADP-L-glycero-beta-D-manno-heptose biosynthesis; ADP-L-glycero-beta-D-manno-heptose from D-glycero-beta-D-manno-heptose 7-phosphate: step 3/4. Its function is as follows. Catalyzes the phosphorylation of D-glycero-D-manno-heptose 7-phosphate at the C-1 position to selectively form D-glycero-beta-D-manno-heptose-1,7-bisphosphate. Functionally, catalyzes the ADP transfer from ATP to D-glycero-beta-D-manno-heptose 1-phosphate, yielding ADP-D-glycero-beta-D-manno-heptose. The polypeptide is Bifunctional protein HldE (Halorhodospira halophila (strain DSM 244 / SL1) (Ectothiorhodospira halophila (strain DSM 244 / SL1))).